The sequence spans 90 residues: Auxin-responsive protein SAUR23 (90 aa).

The protein belongs to the ARG7 family.

The protein resides in the cell membrane. Functionally, functions as a positive effector of cell expansion through modulation of auxin transport. The polypeptide is Auxin-responsive protein SAUR23 (Arabidopsis thaliana (Mouse-ear cress)).